The primary structure comprises 406 residues: RING finger protein PSH1 (406 aa).

Residues 30–72 (CSICHDYMFVPMMTPCGHNYCYGCLNTWFASNTQKELACPQCR) form an RING-type zinc finger. Ser-143 and Ser-191 each carry phosphoserine. Positions 209–406 (RFASTNPFAN…RVVLGDSDDE (198 aa)) are disordered. 3 stretches are compositionally biased toward acidic residues: residues 223–232 (SSEDDDSSEE), 256–274 (AVDD…EEMD), and 281–291 (IEDDEDDEDED). Residue Thr-310 is modified to Phosphothreonine. Ser-403 is modified (phosphoserine).

Interacts with POB3 and SPT16.

The protein resides in the nucleus. The sequence is that of RING finger protein PSH1 (PSH1) from Saccharomyces cerevisiae (strain ATCC 204508 / S288c) (Baker's yeast).